We begin with the raw amino-acid sequence, 267 residues long: Ribosomal RNA small subunit methyltransferase A (267 aa).

S-adenosyl-L-methionine contacts are provided by Asn13, Leu15, Gly39, Glu59, Asp87, and Asn106.

It belongs to the class I-like SAM-binding methyltransferase superfamily. rRNA adenine N(6)-methyltransferase family. RsmA subfamily.

It is found in the cytoplasm. The enzyme catalyses adenosine(1518)/adenosine(1519) in 16S rRNA + 4 S-adenosyl-L-methionine = N(6)-dimethyladenosine(1518)/N(6)-dimethyladenosine(1519) in 16S rRNA + 4 S-adenosyl-L-homocysteine + 4 H(+). Specifically dimethylates two adjacent adenosines (A1518 and A1519) in the loop of a conserved hairpin near the 3'-end of 16S rRNA in the 30S particle. May play a critical role in biogenesis of 30S subunits. This chain is Ribosomal RNA small subunit methyltransferase A, found in Sulfurimonas denitrificans (strain ATCC 33889 / DSM 1251) (Thiomicrospira denitrificans (strain ATCC 33889 / DSM 1251)).